Here is a 135-residue protein sequence, read N- to C-terminus: M-zodatoxin-Lt8q (135 aa).

A signal peptide spans 1–20; it reads MKYFVVALALVAAFACIAES. A propeptide spanning residues 21-60 is cleaved from the precursor; that stretch reads KPAESEHELAEVEEENELADLEDAVWLEHLADLSDLEEAR.

Belongs to the cationic peptide 06 (cytoinsectotoxin) family. In terms of tissue distribution, expressed by the venom gland.

The protein resides in the secreted. In terms of biological role, insecticidal, cytolytic and antimicrobial peptide. Forms voltage-dependent, ion-permeable channels in membranes. At high concentration causes cell membrane lysis. This Lachesana tarabaevi (Spider) protein is M-zodatoxin-Lt8q (cit 1-16).